A 257-amino-acid polypeptide reads, in one-letter code: tRNA pseudouridine synthase A (257 aa).

The active-site Nucleophile is Asp-43. Tyr-94 is a binding site for substrate.

Belongs to the tRNA pseudouridine synthase TruA family.

The enzyme catalyses uridine(38/39/40) in tRNA = pseudouridine(38/39/40) in tRNA. Functionally, formation of pseudouridine at positions 38, 39 and 40 in the anticodon stem and loop of transfer RNAs. The chain is tRNA pseudouridine synthase A from Pyrobaculum calidifontis (strain DSM 21063 / JCM 11548 / VA1).